The chain runs to 506 residues: uncharacterized protein (506 aa).

It to group II intron maturases.

It is found in the plastid. It localises to the chloroplast. This is an uncharacterized protein from Euglena gracilis.